A 187-amino-acid polypeptide reads, in one-letter code: MNLQHHFLIAMPALQDPIFRRSVVYICEHNQDGAMGIIVNKPLENLQIEGILEKLKITPEPRDSAIRLDKAVMLGGPLAEDRGFILHTPPSRFASSIRISDNTVITTSRDVLETLGTQQQPSDVLVALGYASWDKGQLEQELLDNAWLTAPADLNILFKTPIAERWREAAKLIGIDILTMPGVAGHA.

The protein belongs to the UPF0301 (AlgH) family.

The protein is UPF0301 protein YqgE of Salmonella choleraesuis (strain SC-B67).